Reading from the N-terminus, the 193-residue chain is Gas vesicle protein C (193 aa).

Repeats lie at residues 19 to 51 (VAEL…LQAF), 52 to 84 (YKDL…LLAF), 85 to 117 (HKEL…LLAF), 118 to 150 (YQEV…LLAF), and 151 to 183 (HKEL…LLKF). The interval 19–183 (VAELSLETRE…KEQKESLLKF (165 aa)) is 5 X 33 AA tandem repeats.

It belongs to the gas vesicle GvpC family.

The protein resides in the gas vesicle. Functionally, confers stability, involved in shaping gas vesicles (GV), hollow, gas-filled proteinaceous nanostructures. During planktonic growth they allow positioning of the organism at a favorable depth for light or nutrient acquisition. The ratio of GvpA:GvpC is estimated to be 25:1. GvpC strengthens the GV wall, probably by connecting several GvpA proteins in the same and/or adjacent ribs. Removal of GvpC by SDS reduces the critical collapse pressure (CCP) of stored gas vesicles from 0.23 Mpa to 0.08 MPa. Removal of GvpC by urea reduces CCP of freshly isolated GVs from 0.550 MPa to 0.190 MPa; addition of recombinant GvpC restores CCP to 0.508 MPa. As the turgor pressure in this species is usually 0.35 MPa (plus the water column pressure in its growth environment), this protein is essential for GV formation. This chain is Gas vesicle protein C, found in Dolichospermum flosaquae (Anabaena flos-aquae).